We begin with the raw amino-acid sequence, 718 residues long: Polyribonucleotide nucleotidyltransferase (718 aa).

Mg(2+)-binding residues include Asp-493 and Asp-499. The KH domain occupies 560–619 (PRMITIKINPEKIRDVIGKGGSVIRALTEETGTTIDISDDGVVTIASTSSEGMAEAKKRI). The region spanning 629-697 (GQVYEGTVLK…EKGRVRLSAK (69 aa)) is the S1 motif domain.

It belongs to the polyribonucleotide nucleotidyltransferase family. It depends on Mg(2+) as a cofactor.

Its subcellular location is the cytoplasm. It carries out the reaction RNA(n+1) + phosphate = RNA(n) + a ribonucleoside 5'-diphosphate. Its function is as follows. Involved in mRNA degradation. Catalyzes the phosphorolysis of single-stranded polyribonucleotides processively in the 3'- to 5'-direction. This Paraburkholderia phytofirmans (strain DSM 17436 / LMG 22146 / PsJN) (Burkholderia phytofirmans) protein is Polyribonucleotide nucleotidyltransferase.